The sequence spans 84 residues: Small ribosomal subunit protein bS18 (84 aa).

It belongs to the bacterial ribosomal protein bS18 family. Part of the 30S ribosomal subunit. Forms a tight heterodimer with protein bS6.

Functionally, binds as a heterodimer with protein bS6 to the central domain of the 16S rRNA, where it helps stabilize the platform of the 30S subunit. The polypeptide is Small ribosomal subunit protein bS18 (Ruthia magnifica subsp. Calyptogena magnifica).